Here is a 463-residue protein sequence, read N- to C-terminus: Chromogranin-A (463 aa).

A signal peptide spans 1–18 (MRSTAVLALLLCAGQVFA). Cysteines 35 and 56 form a disulfide. Residues 88-440 (KERAQQPLKQ…ANRRAEDQEL (353 aa)) form a disordered region. Positions 92–116 (QQPLKQQQPPKQQQQQQQQQQQEQQ) are enriched in low complexity. The residue at position 119 (Ser119) is a Phosphoserine. A compositionally biased stretch (basic and acidic residues) spans 134-160 (DAKHRDAAAEVPSRDTMEKRKDSDKGQ). The segment covering 196-208 (TATNTQSPTSLPS) has biased composition (polar residues). Phosphoserine is present on residues Ser220, Ser282, and Ser308. A compositionally biased stretch (basic and acidic residues) spans 301-310 (GKGELEHSQQ). Gly329 carries the glycine amide modification. 2 stretches are compositionally biased toward basic and acidic residues: residues 331–340 (KGRELEHKQE) and 348–375 (RLSREWEDKRWSRMDQLAKELTAEKRLE). Phosphoserine occurs at positions 350 and 383. Position 384 is a methionine sulfoxide (Met384). The span at 409-437 (SSREDSVEARSDFEEKKEEEGSANRRAED) shows a compositional bias: basic and acidic residues. Phosphoserine occurs at positions 410, 414, and 430. The O-linked (Xyl...) (chondroitin sulfate) serine glycan is linked to Ser430. Pyrrolidone carboxylic acid is present on Gln438. Phosphoserine is present on Ser444.

Belongs to the chromogranin/secretogranin protein family. As to quaternary structure, self-interacts; self-assembly is promoted in vitro by chondroitin sulfate attachment which occurs at mildly acidic pH conditions. Interacts with SCG3; this interaction is optimal in conditions mimicking the lumenal milieu of the trans-Golgi network, i.e. pH 5.5 and 10 mM Ca(+2). Interacts with ITPR1 in the secretory granules. O-glycosylated; contains chondroitin sulfate (CS). CS attachment is pH-dependent, being observed at mildly acidic conditions of pH 5 but not at neutral pH, and promotes self-assembly in vitro.

The protein resides in the cytoplasmic vesicle. It is found in the secretory vesicle. It localises to the neuronal dense core vesicle. Its subcellular location is the secreted. In terms of biological role, strongly inhibits glucose induced insulin release from the pancreas. Functionally, inhibits catecholamine release from chromaffin cells and noradrenergic neurons by acting as a non-competitive nicotinic cholinergic antagonist. Can induce mast cell migration, degranulation and production of cytokines and chemokines. Its function is as follows. Regulates granule biogenesis in endocrine cells by up-regulating the transcription of protease nexin 1 (SERPINE2) via a cAMP-PKA-SP1 pathway. This leads to inhibition of granule protein degradation in the Golgi complex which in turn promotes granule formation. Pyroglutaminated (pGlu)-serpinin exerts an antiapoptotic effect on cells exposed to oxidative stress. The protein is Chromogranin-A (Chga) of Mus musculus (Mouse).